The chain runs to 117 residues: Large ribosomal subunit protein bL19 (117 aa).

The protein belongs to the bacterial ribosomal protein bL19 family.

Functionally, this protein is located at the 30S-50S ribosomal subunit interface and may play a role in the structure and function of the aminoacyl-tRNA binding site. This Photorhabdus laumondii subsp. laumondii (strain DSM 15139 / CIP 105565 / TT01) (Photorhabdus luminescens subsp. laumondii) protein is Large ribosomal subunit protein bL19.